The following is a 619-amino-acid chain: tRNA (guanine(37)-N(1))-methyltransferase 2 (619 aa).

The N-terminal 10 residues, 1 to 10 (MVSKLSLFRA), are a transit peptide targeting the mitochondrion. S-adenosyl-L-methionine is bound by residues arginine 434, 472–473 (DL), 500–501 (DG), and asparagine 523.

It belongs to the class I-like SAM-binding methyltransferase superfamily. TRM5/TYW2 family. In terms of assembly, monomer.

The protein localises to the mitochondrion matrix. Its subcellular location is the nucleus. It localises to the cytoplasm. The enzyme catalyses guanosine(37) in tRNA + S-adenosyl-L-methionine = N(1)-methylguanosine(37) in tRNA + S-adenosyl-L-homocysteine + H(+). Functionally, specifically methylates the N1 position of guanosine-37 in various cytoplasmic and mitochondrial tRNAs. Methylation is not dependent on the nature of the nucleoside 5' of the target nucleoside. This is the first step in the biosynthesis of wybutosine (yW), a modified base adjacent to the anticodon of tRNAs and required for accurate decoding. In Arabidopsis thaliana (Mouse-ear cress), this protein is tRNA (guanine(37)-N(1))-methyltransferase 2.